The chain runs to 378 residues: Queuine tRNA-ribosyltransferase (378 aa).

The Proton acceptor role is filled by Asp89. Substrate is bound by residues 89-93 (DSGGF), Asp143, Gln187, and Gly214. Residues 245-251 (GVGKPED) are RNA binding. Asp264 serves as the catalytic Nucleophile. The RNA binding; important for wobble base 34 recognition stretch occupies residues 269–273 (TRNAR). The Zn(2+) site is built by Cys302, Cys304, Cys307, and His333.

Belongs to the queuine tRNA-ribosyltransferase family. Homodimer. Within each dimer, one monomer is responsible for RNA recognition and catalysis, while the other monomer binds to the replacement base PreQ1. The cofactor is Zn(2+).

The catalysed reaction is 7-aminomethyl-7-carbaguanine + guanosine(34) in tRNA = 7-aminomethyl-7-carbaguanosine(34) in tRNA + guanine. Its pathway is tRNA modification; tRNA-queuosine biosynthesis. In terms of biological role, catalyzes the base-exchange of a guanine (G) residue with the queuine precursor 7-aminomethyl-7-deazaguanine (PreQ1) at position 34 (anticodon wobble position) in tRNAs with GU(N) anticodons (tRNA-Asp, -Asn, -His and -Tyr). Catalysis occurs through a double-displacement mechanism. The nucleophile active site attacks the C1' of nucleotide 34 to detach the guanine base from the RNA, forming a covalent enzyme-RNA intermediate. The proton acceptor active site deprotonates the incoming PreQ1, allowing a nucleophilic attack on the C1' of the ribose to form the product. After dissociation, two additional enzymatic reactions on the tRNA convert PreQ1 to queuine (Q), resulting in the hypermodified nucleoside queuosine (7-(((4,5-cis-dihydroxy-2-cyclopenten-1-yl)amino)methyl)-7-deazaguanosine). This Aeromonas hydrophila subsp. hydrophila (strain ATCC 7966 / DSM 30187 / BCRC 13018 / CCUG 14551 / JCM 1027 / KCTC 2358 / NCIMB 9240 / NCTC 8049) protein is Queuine tRNA-ribosyltransferase.